A 120-amino-acid chain; its full sequence is Lysozyme (120 aa).

In terms of domain architecture, C-type lysozyme spans 1–120 (KRFTRCGLVN…NHSNPDISSC (120 aa)). Disulfide bonds link C6-C120, C27-C110, C62-C76, and C72-C90. Active-site residues include E32 and D50.

The protein belongs to the glycosyl hydrolase 22 family. Monomer.

It catalyses the reaction Hydrolysis of (1-&gt;4)-beta-linkages between N-acetylmuramic acid and N-acetyl-D-glucosamine residues in a peptidoglycan and between N-acetyl-D-glucosamine residues in chitodextrins.. Functionally, lysozymes have primarily a bacteriolytic function; those in tissues and body fluids are associated with the monocyte-macrophage system and enhance the activity of immunoagents. The chain is Lysozyme from Antheraea mylitta (Tasar silkworm).